A 209-amino-acid polypeptide reads, in one-letter code: Large ribosomal subunit protein uL3 (209 aa).

A compositionally biased stretch (polar residues) spans 112–122; sequence GTTRGHGTQGN. Residues 112–146 form a disordered region; that stretch reads GTTRGHGTQGNIKRWGQSRGPETHGSRYHRIPGSM.

This sequence belongs to the universal ribosomal protein uL3 family. Part of the 50S ribosomal subunit. Forms a cluster with proteins L14 and L19.

In terms of biological role, one of the primary rRNA binding proteins, it binds directly near the 3'-end of the 23S rRNA, where it nucleates assembly of the 50S subunit. The polypeptide is Large ribosomal subunit protein uL3 (Lactobacillus gasseri (strain ATCC 33323 / DSM 20243 / BCRC 14619 / CIP 102991 / JCM 1131 / KCTC 3163 / NCIMB 11718 / NCTC 13722 / AM63)).